The chain runs to 449 residues: Glucose-6-phosphate isomerase (449 aa).

The Proton donor role is filled by E291. Residues H312 and K426 contribute to the active site.

Belongs to the GPI family.

Its subcellular location is the cytoplasm. The enzyme catalyses alpha-D-glucose 6-phosphate = beta-D-fructose 6-phosphate. Its pathway is carbohydrate biosynthesis; gluconeogenesis. It functions in the pathway carbohydrate degradation; glycolysis; D-glyceraldehyde 3-phosphate and glycerone phosphate from D-glucose: step 2/4. In terms of biological role, catalyzes the reversible isomerization of glucose-6-phosphate to fructose-6-phosphate. The sequence is that of Glucose-6-phosphate isomerase from Streptococcus pneumoniae (strain CGSP14).